A 372-amino-acid polypeptide reads, in one-letter code: BTB/POZ and TAZ domain-containing protein 4 (372 aa).

The disordered stretch occupies residues 14–37 (SADSSSVPIPPPLPSKSDGLKKKL). The BTB domain maps to 60 to 128 (ADVVIYTDNG…LYSSCYEKEE (69 aa)). The TAZ-type zinc finger occupies 238-330 (RIYSQLYEAM…SDQCRVPLCR (93 aa)). The interval 341-364 (KKDESRWKLLVKNVLGSKKIGGSP) is caM-binding.

In terms of assembly, interacts with GTE11/BET10 through the BTB domain. Preferentially expressed in leaves, stems and flowers.

It is found in the cytoplasm. Its pathway is protein modification; protein ubiquitination. In terms of biological role, may act as a substrate-specific adapter of an E3 ubiquitin-protein ligase complex (CUL3-RBX1-BTB) which mediates the ubiquitination and subsequent proteasomal degradation of target proteins. This is BTB/POZ and TAZ domain-containing protein 4 (BT4) from Arabidopsis thaliana (Mouse-ear cress).